Reading from the N-terminus, the 137-residue chain is MQNPRRTKYRKQHRGRLRGISSRGNVVSFGKYALQALEPAWITARQIEAGRRAITRHARRGGKLWIRIFPDKPITMRPAETRMGSGKGSPEYWVSVIKPGRIIYELGGVSKEVAEAAMLIAAHKMPIQTRLVTSEKL.

This sequence belongs to the universal ribosomal protein uL16 family. Part of the 50S ribosomal subunit.

The protein localises to the plastid. Its subcellular location is the chloroplast. The polypeptide is Large ribosomal subunit protein uL16c (Adiantum capillus-veneris (Maidenhair fern)).